A 147-amino-acid polypeptide reads, in one-letter code: Cyanate hydratase (147 aa).

Residues R88, E91, and S114 contribute to the active site.

This sequence belongs to the cyanase family.

It carries out the reaction cyanate + hydrogencarbonate + 3 H(+) = NH4(+) + 2 CO2. In terms of biological role, catalyzes the reaction of cyanate with bicarbonate to produce ammonia and carbon dioxide. This Acaryochloris marina (strain MBIC 11017) protein is Cyanate hydratase.